Reading from the N-terminus, the 161-residue chain is Phosphopantetheine adenylyltransferase (161 aa).

A substrate-binding site is contributed by serine 11. Residues 11–12 (SF) and histidine 19 each bind ATP. Substrate is bound by residues lysine 43, leucine 75, and arginine 89. Residues 90–92 (GLR), glutamate 100, and 125–131 (YSYLSSS) each bind ATP.

Belongs to the bacterial CoaD family. In terms of assembly, homohexamer. The cofactor is Mg(2+).

The protein localises to the cytoplasm. The catalysed reaction is (R)-4'-phosphopantetheine + ATP + H(+) = 3'-dephospho-CoA + diphosphate. Its pathway is cofactor biosynthesis; coenzyme A biosynthesis; CoA from (R)-pantothenate: step 4/5. Reversibly transfers an adenylyl group from ATP to 4'-phosphopantetheine, yielding dephospho-CoA (dPCoA) and pyrophosphate. This is Phosphopantetheine adenylyltransferase from Geobacter sp. (strain M21).